The chain runs to 595 residues: Aspartate--tRNA(Asp/Asn) ligase (595 aa).

Glu175 provides a ligand contact to L-aspartate. The interval 199–202 (QQYK) is aspartate. L-aspartate-binding residues include Arg221 and His454. 221 to 223 (RDE) serves as a coordination point for ATP. Glu488 is an ATP binding site. Arg495 is a binding site for L-aspartate. ATP is bound at residue 540-543 (GIDR).

Belongs to the class-II aminoacyl-tRNA synthetase family. Type 1 subfamily. As to quaternary structure, homodimer.

The protein localises to the cytoplasm. It catalyses the reaction tRNA(Asx) + L-aspartate + ATP = L-aspartyl-tRNA(Asx) + AMP + diphosphate. Aspartyl-tRNA synthetase with relaxed tRNA specificity since it is able to aspartylate not only its cognate tRNA(Asp) but also tRNA(Asn). Reaction proceeds in two steps: L-aspartate is first activated by ATP to form Asp-AMP and then transferred to the acceptor end of tRNA(Asp/Asn). This is Aspartate--tRNA(Asp/Asn) ligase from Brucella abortus (strain S19).